A 128-amino-acid chain; its full sequence is Phosphoribosyl-AMP cyclohydrolase (128 aa).

Mg(2+) is bound at residue Asp-77. A Zn(2+)-binding site is contributed by Cys-78. Asp-79 and Asp-81 together coordinate Mg(2+). Residues Cys-94 and Cys-101 each contribute to the Zn(2+) site.

The protein belongs to the PRA-CH family. As to quaternary structure, homodimer. The cofactor is Mg(2+). It depends on Zn(2+) as a cofactor.

It is found in the cytoplasm. The enzyme catalyses 1-(5-phospho-beta-D-ribosyl)-5'-AMP + H2O = 1-(5-phospho-beta-D-ribosyl)-5-[(5-phospho-beta-D-ribosylamino)methylideneamino]imidazole-4-carboxamide. Its pathway is amino-acid biosynthesis; L-histidine biosynthesis; L-histidine from 5-phospho-alpha-D-ribose 1-diphosphate: step 3/9. In terms of biological role, catalyzes the hydrolysis of the adenine ring of phosphoribosyl-AMP. The sequence is that of Phosphoribosyl-AMP cyclohydrolase from Granulibacter bethesdensis (strain ATCC BAA-1260 / CGDNIH1).